A 531-amino-acid chain; its full sequence is Doublesex- and mab-3-related transcription factor A2 (531 aa).

A DNA-binding region (DM) is located at residues 69-116 (CARCRNHGVVSALKGHKRYCRWKDCLCAKCTLIAERQRVMAAQVALRR). The interval 197–312 (LQAGRPDSPQ…GGPGPRQRTP (116 aa)) is disordered. Residues 274–285 (PGSSSPLGSESG) show a composition bias toward low complexity. Positions 310–345 (RTPLDILTRVFPGHRRGVLELVLQGCGGDVVQAIEQ) constitute a DMA domain.

Belongs to the DMRT family. As to expression, expressed in adult brain and testis, as well as in embryonic ovary, kidney, heart, lung, stomach and brain.

The protein localises to the nucleus. In terms of biological role, may be involved in sexual development. The chain is Doublesex- and mab-3-related transcription factor A2 (Dmrta2) from Mus musculus (Mouse).